The primary structure comprises 756 residues: U3 small nucleolar RNA-associated protein 25 homolog (756 aa).

The tract at residues 1–159 (MGKRGSRSQS…SQTSPEEFTD (159 aa)) is disordered. Promotes p53/TP53 degradation stretches follow at residues 1–185 (MGKR…SLKA) and 573–635 (VQLP…KKEE). Ser10 is modified (phosphoserine). Residues 25-43 (RDFGEEHPFYDRVSRKEAK) show a composition bias toward basic and acidic residues. Phosphoserine occurs at positions 50, 52, 58, 60, 62, and 64. Acidic residues-rich tracts occupy residues 54 to 64 (DSSDSESDSES) and 84 to 121 (EEEE…EEMA). The segment at 636-697 (LNFTHICEYT…YELPTYPHFY (62 aa)) is represses p53/TP53 degradation.

Belongs to the UTP25 family. As to quaternary structure, interacts with CAPN3; the interaction is required for CAPN3 translocation to the nucleolus. Phosphorylated. Phosphorylation is required to promote p53/TP53 degradation in the nucleolus which promotes cell cycle progression and liver development. As to expression, expressed in colon.

Its subcellular location is the nucleus. The protein localises to the nucleolus. Component of the ribosomal small subunit processome for the biogenesis of ribosomes, functions in pre-ribosomal RNA (pre-rRNA) processing. Essential for embryonic development in part through the regulation of p53 pathway. Controls the expansion growth of digestive organs and liver. Also involved in the sympathetic neuronal development. Mediates, with CAPN3, the proteasome-independent degradation of p53/TP53. This chain is U3 small nucleolar RNA-associated protein 25 homolog, found in Homo sapiens (Human).